A 269-amino-acid chain; its full sequence is Formamidopyrimidine-DNA glycosylase (269 aa).

Catalysis depends on Pro2, which acts as the Schiff-base intermediate with DNA. Glu3 acts as the Proton donor in catalysis. Lys57 serves as the catalytic Proton donor; for beta-elimination activity. 3 residues coordinate DNA: His90, Arg109, and Lys150. An FPG-type zinc finger spans residues 235–269 (QVYGRKGEPCRVCGTPIVATKHAQRATFYCRQCQK). The active-site Proton donor; for delta-elimination activity is the Arg259.

This sequence belongs to the FPG family. As to quaternary structure, monomer. Zn(2+) is required as a cofactor.

The enzyme catalyses Hydrolysis of DNA containing ring-opened 7-methylguanine residues, releasing 2,6-diamino-4-hydroxy-5-(N-methyl)formamidopyrimidine.. It catalyses the reaction 2'-deoxyribonucleotide-(2'-deoxyribose 5'-phosphate)-2'-deoxyribonucleotide-DNA = a 3'-end 2'-deoxyribonucleotide-(2,3-dehydro-2,3-deoxyribose 5'-phosphate)-DNA + a 5'-end 5'-phospho-2'-deoxyribonucleoside-DNA + H(+). Functionally, involved in base excision repair of DNA damaged by oxidation or by mutagenic agents. Acts as a DNA glycosylase that recognizes and removes damaged bases. Has a preference for oxidized purines, such as 7,8-dihydro-8-oxoguanine (8-oxoG). Has AP (apurinic/apyrimidinic) lyase activity and introduces nicks in the DNA strand. Cleaves the DNA backbone by beta-delta elimination to generate a single-strand break at the site of the removed base with both 3'- and 5'-phosphates. The chain is Formamidopyrimidine-DNA glycosylase from Escherichia coli O7:K1 (strain IAI39 / ExPEC).